The primary structure comprises 621 residues: Signal recognition particle receptor subunit alpha homolog (621 aa).

Positions 1-158 (MFDQLAVFTP…KKFEQYFRIK (158 aa)) are SRX. Residues 167 to 217 (HINPDNFTKNGSVPQSHNKNTKKKLRDTKGKKQSTGNVGSGRKWGRDGGML) form a disordered region. The span at 171–183 (DNFTKNGSVPQSH) shows a compositional bias: polar residues. The segment covering 185-198 (KNTKKKLRDTKGKK) has biased composition (basic residues). Ser-239 is modified (phosphoserine). The segment at 398-620 (YVFSIVGVNG…SVKWAVNTLM (223 aa)) is NG domain. GTP contacts are provided by residues 404-411 (GVNGVGKS) and 510-514 (DTAGR). Ser-523 bears the Phosphoserine mark. 572-575 (SKCD) serves as a coordination point for GTP.

It belongs to the GTP-binding SRP family. In terms of assembly, heterodimer of an alpha and a beta chain.

Its subcellular location is the endoplasmic reticulum membrane. Functionally, component of the SRP (signal recognition particle) receptor (SR). Ensures, in conjunction with the signal recognition particle, the correct targeting of the nascent secretory proteins to the endoplasmic reticulum membrane system. GTP hydrolysis may enhance the fidelity of and provide unidirectionality to the targeting reaction. It is important but not essential for cell growth. May be directly involved in mitochondrial protein import. This chain is Signal recognition particle receptor subunit alpha homolog (SRP101), found in Saccharomyces cerevisiae (strain ATCC 204508 / S288c) (Baker's yeast).